Here is a 434-residue protein sequence, read N- to C-terminus: Enolase (434 aa).

Q165 contacts (2R)-2-phosphoglycerate. E207 serves as the catalytic Proton donor. Positions 244, 291, and 318 each coordinate Mg(2+). (2R)-2-phosphoglycerate is bound by residues K343, R372, S373, and K394. The active-site Proton acceptor is K343.

It belongs to the enolase family. Mg(2+) is required as a cofactor.

It localises to the cytoplasm. It is found in the secreted. The protein localises to the cell surface. The catalysed reaction is (2R)-2-phosphoglycerate = phosphoenolpyruvate + H2O. It functions in the pathway carbohydrate degradation; glycolysis; pyruvate from D-glyceraldehyde 3-phosphate: step 4/5. In terms of biological role, catalyzes the reversible conversion of 2-phosphoglycerate (2-PG) into phosphoenolpyruvate (PEP). It is essential for the degradation of carbohydrates via glycolysis. The sequence is that of Enolase from Staphylococcus epidermidis (strain ATCC 35984 / DSM 28319 / BCRC 17069 / CCUG 31568 / BM 3577 / RP62A).